The primary structure comprises 200 residues: MGNLFARKRRSRVTEQDKAVLQLKQQRDKLKQYQKKITLQLQRERELAKQLLHDGKKEKAKLLLKKKRYQEQLLEKTDNQISNLEKMVDDIEFAQIEMKVIEGLKVGNEWLKKMHEVMSIEEVEKIMEETQEGIEYQRQIDEMLSGSLTAEDEEAILEELEAITQEDLELPEAPSEPLSDTVPEKQAVKNRPKPQLVAAS.

G2 carries N-myristoyl glycine lipidation. The stretch at 9-102 forms a coiled coil; the sequence is RRSRVTEQDK…FAQIEMKVIE (94 aa). Residues 165–200 form a disordered region; it reads QEDLELPEAPSEPLSDTVPEKQAVKNRPKPQLVAAS. Residues 168–179 carry the Type-2 MIT-interacting motif motif; sequence LELPEAPSEPLS.

It belongs to the SNF7 family. In terms of assembly, probable core component of the endosomal sorting required for transport complex III (ESCRT-III). ESCRT-III components are thought to multimerize to form a flat lattice on the perimeter membrane of the endosome.

It localises to the endomembrane system. It is found in the late endosome membrane. Its function is as follows. Probable core component of the endosomal sorting required for transport complex III (ESCRT-III) which is involved in multivesicular bodies (MVBs) formation and sorting of endosomal cargo proteins into MVBs. MVBs contain intraluminal vesicles (ILVs) that are generated by invagination and scission from the limiting membrane of the endosome and mostly are delivered to lysosomes enabling degradation of membrane proteins, such as stimulated growth factor receptors, lysosomal enzymes and lipids. In the ESCRT-III complex, it probably serves as an acceptor for the ESCRT-II complex on endosomal membranes. This chain is Charged multivesicular body protein 6-B (chmp6-b), found in Xenopus laevis (African clawed frog).